A 779-amino-acid chain; its full sequence is uncharacterized protein (779 aa).

Phosphoserine occurs at positions 97 and 120. The segment covering 125–135 has biased composition (basic and acidic residues); it reads EIDGEDEKKSV. The disordered stretch occupies residues 125-174; it reads EIDGEDEKKSVGQESITGSAKRKDRRSKTNGSKRQKAEANREPPSDISLS. Over residues 144–158 the composition is skewed to basic residues; sequence AKRKDRRSKTNGSKR. Residues 159–168 show a composition bias toward basic and acidic residues; the sequence is QKAEANREPP. ATP-binding positions include 215–222 and 533–540; these read GPPGCGKT. The interval 759 to 779 is disordered; that stretch reads DRQKYQRLAKRWSSASTNDAD.

Belongs to the AAA ATPase family.

It localises to the nucleus. This is an uncharacterized protein from Schizosaccharomyces pombe (strain 972 / ATCC 24843) (Fission yeast).